A 342-amino-acid polypeptide reads, in one-letter code: tRNA N6-adenosine threonylcarbamoyltransferase (342 aa).

H120 and H124 together coordinate Fe cation. Residues 142 to 146, D175, G188, D192, and N281 contribute to the substrate site; that span reads VVSGG. D310 contributes to the Fe cation binding site.

Belongs to the KAE1 / TsaD family. Fe(2+) is required as a cofactor.

It is found in the cytoplasm. It catalyses the reaction L-threonylcarbamoyladenylate + adenosine(37) in tRNA = N(6)-L-threonylcarbamoyladenosine(37) in tRNA + AMP + H(+). Required for the formation of a threonylcarbamoyl group on adenosine at position 37 (t(6)A37) in tRNAs that read codons beginning with adenine. Is involved in the transfer of the threonylcarbamoyl moiety of threonylcarbamoyl-AMP (TC-AMP) to the N6 group of A37, together with TsaE and TsaB. TsaD likely plays a direct catalytic role in this reaction. This is tRNA N6-adenosine threonylcarbamoyltransferase from Geobacillus kaustophilus (strain HTA426).